The sequence spans 210 residues: Protein PF1979 (210 aa).

Residues glutamate 7–arginine 201 form the AMMECR1 domain.

The protein is Protein PF1979 of Pyrococcus furiosus (strain ATCC 43587 / DSM 3638 / JCM 8422 / Vc1).